Here is a 702-residue protein sequence, read N- to C-terminus: MNSLFASTARGLEELLKTELENLGAVECQVVQGGVHFKGDTRLVYQSLMWSRLASRIMLPLGECKVYSDLDLYLGVQAINWTEMFNPGATFAVHFSGLNDTIRNSQYGAMKVKDAIVDAFTRKNLPRPNVDRDAPDIRVNVWLHKETASIALDLSGDGLHLRGYRDRAGIAPIKETLAAAIVMRSGWQPGTPLLDPMCGSGTLLIEAAMLATDRAPGLHRGRWGFSGWTQHDEAIWQEVKAEAQTRARKGLAEYSSHFYGSDSDARVIQRARTNARLAGIGELITFEVKDVAQLTNPLPKGPYGTVLSNPPYGERLDSEPALIALHSLLGRIMKNQFGGWNLSLFSASPDLLSCLQLRADKQYKAKNGPLDCVQKNYHVAESTPDSKPAMAAEDYANRLRKNLKKFEKWARQEGIECYRLYDADLPEYNVAVDRYADWVVVQEYAPPKTIDAHKARQRLFDIIAATISVLGIAPNKLVLKTRERQKGKNQYQKLGEKGEFLEVTEYNAHLWVNLTDYLDTGLFLDHRIARRMLGQMSKGKDFLNLFSYTGSATVHAGLGGARSTTTVDMSRTYLEWAERNLRLNGLTGRAHRLIQADCLAWLREANEQFDLIFIDPPTFSNSKRMEDAFDVQRDHLVLMKDLKRLLRAGGTIMFSNNKRGFRMDLDGLAKLGLKAQEITQKTLSQDFARNRQIHNCWLITAA.

Residues 43–154 (LVYQSLMWSR…KETASIALDL (112 aa)) enclose the THUMP domain.

This sequence belongs to the methyltransferase superfamily. RlmKL family.

The protein localises to the cytoplasm. It catalyses the reaction guanosine(2445) in 23S rRNA + S-adenosyl-L-methionine = N(2)-methylguanosine(2445) in 23S rRNA + S-adenosyl-L-homocysteine + H(+). The enzyme catalyses guanosine(2069) in 23S rRNA + S-adenosyl-L-methionine = N(2)-methylguanosine(2069) in 23S rRNA + S-adenosyl-L-homocysteine + H(+). Its function is as follows. Specifically methylates the guanine in position 2445 (m2G2445) and the guanine in position 2069 (m7G2069) of 23S rRNA. This chain is Ribosomal RNA large subunit methyltransferase K/L, found in Escherichia coli O6:K15:H31 (strain 536 / UPEC).